We begin with the raw amino-acid sequence, 395 residues long: Argininosuccinate synthase (395 aa).

ATP-binding positions include 6–14 (AYSGGLDTS) and Ala33. Residue Tyr84 participates in L-citrulline binding. Gly114 provides a ligand contact to ATP. Residues Thr116, Asn120, and Asp121 each contribute to the L-aspartate site. Asn120 provides a ligand contact to L-citrulline. Residues Arg124, Ser173, Ser182, Glu258, and Tyr270 each contribute to the L-citrulline site.

The protein belongs to the argininosuccinate synthase family. Type 1 subfamily. Homotetramer.

The protein resides in the cytoplasm. The enzyme catalyses L-citrulline + L-aspartate + ATP = 2-(N(omega)-L-arginino)succinate + AMP + diphosphate + H(+). Its pathway is amino-acid biosynthesis; L-arginine biosynthesis; L-arginine from L-ornithine and carbamoyl phosphate: step 2/3. This chain is Argininosuccinate synthase, found in Rhodococcoides fascians (Rhodococcus fascians).